A 135-amino-acid chain; its full sequence is MERTLVLIKPDGVRRNIIGEVISRIERKGLKIVAMELRTLDEETAKAHYEEHVEKPFFSSLVEFITGGPLVAMVVEGNRAIEAFRSLAGATDPVLAAPGTIRGDYGLDVQANIVHGSDSTYSAEREIKLFFPDLA.

Residues Lys9, Phe57, Arg85, Thr91, Arg102, and Asn112 each contribute to the ATP site. His115 (pros-phosphohistidine intermediate) is an active-site residue.

The protein belongs to the NDK family. As to quaternary structure, homotetramer. It depends on Mg(2+) as a cofactor.

The protein resides in the cytoplasm. The enzyme catalyses a 2'-deoxyribonucleoside 5'-diphosphate + ATP = a 2'-deoxyribonucleoside 5'-triphosphate + ADP. It catalyses the reaction a ribonucleoside 5'-diphosphate + ATP = a ribonucleoside 5'-triphosphate + ADP. In terms of biological role, major role in the synthesis of nucleoside triphosphates other than ATP. The ATP gamma phosphate is transferred to the NDP beta phosphate via a ping-pong mechanism, using a phosphorylated active-site intermediate. In Thermobifida fusca (strain YX), this protein is Nucleoside diphosphate kinase.